A 237-amino-acid polypeptide reads, in one-letter code: tRNA1(Val) (adenine(37)-N6)-methyltransferase (237 aa).

This sequence belongs to the methyltransferase superfamily. tRNA (adenine-N(6)-)-methyltransferase family.

The protein resides in the cytoplasm. It carries out the reaction adenosine(37) in tRNA1(Val) + S-adenosyl-L-methionine = N(6)-methyladenosine(37) in tRNA1(Val) + S-adenosyl-L-homocysteine + H(+). In terms of biological role, specifically methylates the adenine in position 37 of tRNA(1)(Val) (anticodon cmo5UAC). The sequence is that of tRNA1(Val) (adenine(37)-N6)-methyltransferase from Pasteurella multocida (strain Pm70).